Consider the following 785-residue polypeptide: Cadherin-7 (785 aa).

An N-terminal signal peptide occupies residues Met1–Ala27. A propeptide spanning residues Glu28–Arg47 is cleaved from the precursor. The Extracellular segment spans residues Glu28–Thr607. Cadherin domains lie at Trp49 to Phe153, Leu154 to Phe262, Pro263 to Phe377, Ser378 to Phe482, and Phe482 to Tyr599. 2 N-linked (GlcNAc...) asparagine glycosylation sites follow: Asn449 and Asn530. A helical membrane pass occupies residues Gly608–Val628. Residues Thr629–Ser785 are Cytoplasmic-facing.

The protein resides in the cell membrane. Cadherins are calcium-dependent cell adhesion proteins. They preferentially interact with themselves in a homophilic manner in connecting cells; cadherins may thus contribute to the sorting of heterogeneous cell types. The polypeptide is Cadherin-7 (Cdh7) (Mus musculus (Mouse)).